Reading from the N-terminus, the 411-residue chain is Tyrosine--tRNA ligase (411 aa).

Position 34 (Tyr-34) interacts with L-tyrosine. The short motif at 39–48 (CTATSLHIGS) is the 'HIGH' region element. The L-tyrosine site is built by Tyr-171 and Gln-175. Residues 231 to 235 (KMGKT) carry the 'KMSKS' region motif. An ATP-binding site is contributed by Lys-234. The region spanning 345–411 (ISAYKLFYNV…GKKRHILVKV (67 aa)) is the S4 RNA-binding domain.

Belongs to the class-I aminoacyl-tRNA synthetase family. TyrS type 1 subfamily. As to quaternary structure, homodimer.

Its subcellular location is the cytoplasm. The enzyme catalyses tRNA(Tyr) + L-tyrosine + ATP = L-tyrosyl-tRNA(Tyr) + AMP + diphosphate + H(+). Functionally, catalyzes the attachment of tyrosine to tRNA(Tyr) in a two-step reaction: tyrosine is first activated by ATP to form Tyr-AMP and then transferred to the acceptor end of tRNA(Tyr). The sequence is that of Tyrosine--tRNA ligase from Rickettsia typhi (strain ATCC VR-144 / Wilmington).